The sequence spans 101 residues: MAQTSAVEKNKRREKLVKRHAVKRARLKAIVMDQGLPLEERFRATIRLAELPRNSAKVRIRNRCEVSGRPRGYYRKLKMSRIALRQLGSLGQIPGVVKSSW.

It belongs to the universal ribosomal protein uS14 family. Part of the 30S ribosomal subunit. Contacts proteins S3 and S10.

Functionally, binds 16S rRNA, required for the assembly of 30S particles and may also be responsible for determining the conformation of the 16S rRNA at the A site. The protein is Small ribosomal subunit protein uS14 of Brucella abortus (strain 2308).